The chain runs to 234 residues: Pepsin inhibitor Dit33 (234 aa).

The N-terminal stretch at 1 to 17 (MKILFCFVLLAIAALRA) is a signal peptide. C135 and C230 are oxidised to a cystine. Positions 200-222 (RHETSSQPSDATTISTTTQAPVE) are disordered. Polar residues predominate over residues 204–219 (SSQPSDATTISTTTQA).

This sequence belongs to the protease inhibitor I33 family.

The protein resides in the secreted. Functionally, aspartyl protease inhibitor. In Dirofilaria immitis (Canine heartworm), this protein is Pepsin inhibitor Dit33 (DIT33).